The sequence spans 743 residues: Type VI secretion system spike protein VgrG1 (743 aa).

This sequence belongs to the VgrG protein family.

It localises to the secreted. It catalyses the reaction L-arginyl-[protein] + NAD(+) = N(omega)-(ADP-D-ribosyl)-L-arginyl-[protein] + nicotinamide + H(+). Functionally, part of the type VI secretion system specialized secretion system, which delivers several virulence factors in both prokaryotic and eukaryotic cells during infection. Acts directly as an secreted effector with an actin ADP-ribosyltransferase activity that disrupts the host actin cytoskeleton, leading to a decrease in host cell viability and an increase in apoptosis. This is Type VI secretion system spike protein VgrG1 (vgrG1) from Aeromonas hydrophila subsp. hydrophila (strain ATCC 7966 / DSM 30187 / BCRC 13018 / CCUG 14551 / JCM 1027 / KCTC 2358 / NCIMB 9240 / NCTC 8049).